The following is a 1594-amino-acid chain: RB1-inducible coiled-coil protein 1 (1594 aa).

Phosphoserine occurs at positions 222, 229, and 237. T238 carries the phosphothreonine modification. A phosphoserine mark is found at S243, S253, S257, S261, and S266. The Nuclear localization signal signature appears at K566–K569. Phosphoserine occurs at positions 624, 647, 650, 652, 653, 734, 1091, 1222, 1370, and 1484. Positions E638 to P673 are disordered. The span at A641–P654 shows a compositional bias: low complexity. An FFAT motif is present at residues D731 to N737. Coiled-coil stretches lie at residues L859 to F1397 and M1438 to M1485.

Belongs to the ATG17 family. In terms of assembly, part of a complex consisting of ATG13/KIAA0652, ULK1 and RB1CC1. This complex associates with ATG101. Interacts with PTK2/FAK1 and PTK2B/PYK2. Interacts with GABARAP and GABARAPL1. Interacts with ATG16L1; the interaction is required for ULK1 complex-dependent autophagy. Interacts with RNF111, SKI and SMAD7. Interacts with COP1 in the cytoplasm of proliferating cells in response to UV stimulation. Interacts with TP53. Interacts with C9orf72. Interacts with WDR45B. Interacts with ATG13; this interaction is increased in the absence of TMEM39A. Interacts with WIPI2. Interacts with TAX1BP1. Interacts (via phosphorylated FFAT motif) with MOSPD2, VAPA and VAPB. Phosphorylation at Ser-734 of the FFAT motif activates interaction with MOSPD2, VAPA and VAPB. As to expression, expression levels correlated closely with those of RB1 in cancer cell lines as well as in various normal human tissues. Abundantly expressed in human musculoskeletal and cultured osteosarcoma cells.

It localises to the nucleus. The protein localises to the cytoplasm. The protein resides in the cytosol. It is found in the preautophagosomal structure. Its subcellular location is the lysosome. Its function is as follows. Involved in autophagy. Regulates early events but also late events of autophagosome formation through direct interaction with Atg16L1. Required for the formation of the autophagosome-like double-membrane structure that surrounds the Salmonella-containing vacuole (SCV) during S.typhimurium infection and subsequent xenophagy. Involved in repair of DNA damage caused by ionizing radiation, which subsequently improves cell survival by decreasing apoptosis. Inhibits PTK2/FAK1 and PTK2B/PYK2 kinase activity, affecting their downstream signaling pathways. Plays a role as a modulator of TGF-beta-signaling by restricting substrate specificity of RNF111. Functions as a DNA-binding transcription factor. Is a potent regulator of the RB1 pathway through induction of RB1 expression. Plays a crucial role in muscular differentiation. Plays an indispensable role in fetal hematopoiesis and in the regulation of neuronal homeostasis. This is RB1-inducible coiled-coil protein 1 from Homo sapiens (Human).